Here is a 516-residue protein sequence, read N- to C-terminus: GMP synthase [glutamine-hydrolyzing] (516 aa).

Residues 8–198 form the Glutamine amidotransferase type-1 domain; it reads KILILDFGSQ…VVNICGCDTL (191 aa). C84 (nucleophile) is an active-site residue. Active-site residues include H172 and E174. In terms of domain architecture, GMPS ATP-PPase spans 199–391; sequence WNIENIIEND…LGLPYNMLYR (193 aa). 226 to 232 serves as a coordination point for ATP; that stretch reads SGGVDSS.

Homodimer.

It carries out the reaction XMP + L-glutamine + ATP + H2O = GMP + L-glutamate + AMP + diphosphate + 2 H(+). The protein operates within purine metabolism; GMP biosynthesis; GMP from XMP (L-Gln route): step 1/1. Functionally, catalyzes the synthesis of GMP from XMP. The protein is GMP synthase [glutamine-hydrolyzing] of Francisella tularensis subsp. novicida (strain U112).